A 361-amino-acid chain; its full sequence is Tyrosine--tRNA ligase (361 aa).

L-tyrosine is bound by residues Tyr36, Tyr162, Gln166, Asp169, and Gln184. The 'KMSKS' region signature appears at 236-240; the sequence is KMSKS. Position 239 (Lys239) interacts with ATP.

Belongs to the class-I aminoacyl-tRNA synthetase family. TyrS type 4 subfamily. In terms of assembly, homodimer.

It is found in the cytoplasm. The catalysed reaction is tRNA(Tyr) + L-tyrosine + ATP = L-tyrosyl-tRNA(Tyr) + AMP + diphosphate + H(+). Its function is as follows. Catalyzes the attachment of tyrosine to tRNA(Tyr) in a two-step reaction: tyrosine is first activated by ATP to form Tyr-AMP and then transferred to the acceptor end of tRNA(Tyr). In Saccharolobus islandicus (strain L.S.2.15 / Lassen #1) (Sulfolobus islandicus), this protein is Tyrosine--tRNA ligase.